We begin with the raw amino-acid sequence, 194 residues long: MSEIKLIVGLGNPGEKYADTRHNAGEWLIERLARRFNVSLNPESKFFGKTVRTLVNGKEVRLLVPTTFMNLSGKAVGALASFYRIKPEEILVIHDELDLPAGTAKLKQGGGHGGHNGLKDIVAQLGNNNNFYRLRIGIGHPGHRDLVAGYVLNKPSPADRNALEKVLDEATDCVEMIFKDGMIKATNRLNSFKI.

Tyr-17 is a binding site for tRNA. His-22 functions as the Proton acceptor in the catalytic mechanism. Residues Phe-68, Asn-70, and Asn-116 each coordinate tRNA.

The protein belongs to the PTH family. In terms of assembly, monomer.

The protein resides in the cytoplasm. The enzyme catalyses an N-acyl-L-alpha-aminoacyl-tRNA + H2O = an N-acyl-L-amino acid + a tRNA + H(+). Its function is as follows. Hydrolyzes ribosome-free peptidyl-tRNAs (with 1 or more amino acids incorporated), which drop off the ribosome during protein synthesis, or as a result of ribosome stalling. In terms of biological role, catalyzes the release of premature peptidyl moieties from peptidyl-tRNA molecules trapped in stalled 50S ribosomal subunits, and thus maintains levels of free tRNAs and 50S ribosomes. The protein is Peptidyl-tRNA hydrolase of Haemophilus influenzae (strain PittGG).